Consider the following 131-residue polypeptide: Glycine cleavage system H protein (131 aa).

The 83-residue stretch at 24–106 folds into the Lipoyl-binding domain; sequence IATLGISAFA…HGEGWLLKVR (83 aa). Lysine 65 carries the post-translational modification N6-lipoyllysine.

It belongs to the GcvH family. As to quaternary structure, the glycine cleavage system is composed of four proteins: P, T, L and H. The cofactor is (R)-lipoate.

The glycine cleavage system catalyzes the degradation of glycine. The H protein shuttles the methylamine group of glycine from the P protein to the T protein. This Microcystis aeruginosa (strain NIES-843 / IAM M-2473) protein is Glycine cleavage system H protein.